Reading from the N-terminus, the 352-residue chain is PDZ and LIM domain protein 2 (352 aa).

One can recognise a PDZ domain in the interval 1–84 (MALTVDVAGP…PLRLQLDRSQ (84 aa)). 2 disordered regions span residues 67 to 97 (SKIR…DSSL) and 111 to 149 (YTES…TGEA). The segment covering 81 to 95 (DRSQATSPGQTNGDS) has biased composition (polar residues). Low complexity predominate over residues 111–135 (YTESQSSLRSSYSSPTSLSPRAGSP). Residue S124 is modified to Phosphoserine. The residue at position 126 (T126) is a Phosphothreonine. S127, S129, S134, S137, S143, S161, S197, S203, S213, and S266 each carry phosphoserine. The tract at residues 170–213 (LSYSGRPGSRQAGLGRAGDSAVLVLPPSPGPRSSRPSMDSEGGS) is disordered. The LIM zinc-binding domain occupies 284–344 (HTCEKCSTSI…EKHARQRYSA (61 aa)).

Interacts with alpha-actinins ACTN1 and ACTN4, FLNA and MYH9. Interacts (via LIM zinc-binding domain) with MKRN2.

It is found in the cytoplasm. Its subcellular location is the nucleus. It localises to the cytoskeleton. In terms of biological role, probable adapter protein located at the actin cytoskeleton that promotes cell attachment. Necessary for the migratory capacity of epithelial cells. Overexpression enhances cell adhesion to collagen and fibronectin and suppresses anchorage independent growth. May contribute to tumor cell migratory capacity. The polypeptide is PDZ and LIM domain protein 2 (PDLIM2) (Homo sapiens (Human)).